The primary structure comprises 478 residues: 2-succinylbenzoate--CoA ligase (478 aa).

Belongs to the ATP-dependent AMP-binding enzyme family. MenE subfamily.

The catalysed reaction is 2-succinylbenzoate + ATP + CoA = 2-succinylbenzoyl-CoA + AMP + diphosphate. The protein operates within quinol/quinone metabolism; 1,4-dihydroxy-2-naphthoate biosynthesis; 1,4-dihydroxy-2-naphthoate from chorismate: step 5/7. It participates in quinol/quinone metabolism; menaquinone biosynthesis. Converts 2-succinylbenzoate (OSB) to 2-succinylbenzoyl-CoA (OSB-CoA). In Bacillus licheniformis (strain ATCC 14580 / DSM 13 / JCM 2505 / CCUG 7422 / NBRC 12200 / NCIMB 9375 / NCTC 10341 / NRRL NRS-1264 / Gibson 46), this protein is 2-succinylbenzoate--CoA ligase.